The sequence spans 424 residues: Histidinol dehydrogenase (424 aa).

NAD(+) is bound by residues Tyr-121, Gln-183, and Asn-206. Substrate contacts are provided by Ser-229, Gln-251, and His-254. The Zn(2+) site is built by Gln-251 and His-254. Catalysis depends on proton acceptor residues Glu-319 and His-320. 4 residues coordinate substrate: His-320, Asp-353, Glu-407, and His-412. Residue Asp-353 coordinates Zn(2+). His-412 provides a ligand contact to Zn(2+).

The protein belongs to the histidinol dehydrogenase family. Zn(2+) is required as a cofactor.

The catalysed reaction is L-histidinol + 2 NAD(+) + H2O = L-histidine + 2 NADH + 3 H(+). Its pathway is amino-acid biosynthesis; L-histidine biosynthesis; L-histidine from 5-phospho-alpha-D-ribose 1-diphosphate: step 9/9. Functionally, catalyzes the sequential NAD-dependent oxidations of L-histidinol to L-histidinaldehyde and then to L-histidine. The protein is Histidinol dehydrogenase of Geobacillus kaustophilus (strain HTA426).